We begin with the raw amino-acid sequence, 208 residues long: Probable GTP-binding protein EngB (208 aa).

Residues Gly22–Glu195 form the EngB-type G domain. GTP is bound by residues Gly30–Ser37, Gly57–Thr61, Asp75–Gly78, Thr142–Asp145, and Ile174–Ser176. Mg(2+) is bound by residues Ser37 and Thr59.

This sequence belongs to the TRAFAC class TrmE-Era-EngA-EngB-Septin-like GTPase superfamily. EngB GTPase family. Requires Mg(2+) as cofactor.

Necessary for normal cell division and for the maintenance of normal septation. This is Probable GTP-binding protein EngB from Alkaliphilus metalliredigens (strain QYMF).